The chain runs to 332 residues: Tryptophan--tRNA ligase (332 aa).

Residues 11–13 (TST) and 19–20 (GN) contribute to the ATP site. Residues 12–20 (STGKLTLGN) carry the 'HIGH' region motif. Residue aspartate 140 participates in L-tryptophan binding. ATP is bound by residues 152–154 (GQD), isoleucine 191, and 200–204 (KMSKS). A 'KMSKS' region motif is present at residues 200–204 (KMSKS).

It belongs to the class-I aminoacyl-tRNA synthetase family. In terms of assembly, homodimer.

Its subcellular location is the cytoplasm. It carries out the reaction tRNA(Trp) + L-tryptophan + ATP = L-tryptophyl-tRNA(Trp) + AMP + diphosphate + H(+). Catalyzes the attachment of tryptophan to tRNA(Trp). The chain is Tryptophan--tRNA ligase from Mycoplasmopsis pulmonis (strain UAB CTIP) (Mycoplasma pulmonis).